The chain runs to 224 residues: Cutinase 1 (224 aa).

Positions 1–16 (MKFLSVLSLAITLAAA) are cleaved as a signal peptide. Cys46 and Cys125 are joined by a disulfide. Ser136 functions as the Nucleophile in the catalytic mechanism. Cys187 and Cys194 are disulfide-bonded. Asp191 is an active-site residue. The active-site Proton donor/acceptor is the His204.

Belongs to the cutinase family. The 2 disulfide bonds play a critical role in holding the catalytic residues in juxta-position; reduction of the disulfide bridges results in the complete inactivation of the enzyme. Post-translationally, the N-terminus is blocked.

Its subcellular location is the secreted. The enzyme catalyses cutin + H2O = cutin monomers.. Inhibited by diisopropyl fluorophosphate (DFP). Its function is as follows. Catalyzes the hydrolysis of complex carboxylic polyesters found in the cell wall of plants. Degrades cutin, a macromolecule that forms the structure of the plant cuticle. Allows pathogenic fungi to penetrate through the cuticular barrier into the host plant during the initial stage of fungal infection. This Colletotrichum gloeosporioides (Anthracnose fungus) protein is Cutinase 1 (CUTA).